Consider the following 596-residue polypeptide: Serine/threonine-protein kinase PknH (596 aa).

At 1-373 (MSDAQDSRVG…QTPRKTNPWP (373 aa)) the chain is on the cytoplasmic side. Residues 16-276 (YHLKRLLGRG…DLALAAHEAL (261 aa)) enclose the Protein kinase domain. Residues 22 to 30 (LGRGGMGEV) and Lys-45 each bind ATP. The active-site Proton acceptor is the Asp-139. The residue at position 170 (Thr-170) is a Phosphothreonine. A disordered region spans residues 292 to 368 (QESTLPGTAA…PSPWAQTPRK (77 aa)). The span at 307-318 (PTMPTVTPPPIQ) shows a compositional bias: pro residues. Residues 374–394 (LVAGAAAVVLVLVLGAIGIWI) form a helical membrane-spanning segment. At 395 to 596 (ANRPKPVQPP…AKIVDKVNKE (202 aa)) the chain is on the extracellular side.

The protein belongs to the protein kinase superfamily. Ser/Thr protein kinase family. In terms of processing, autophosphorylated on threonine and serine residues.

Its subcellular location is the cell membrane. It carries out the reaction L-seryl-[protein] + ATP = O-phospho-L-seryl-[protein] + ADP + H(+). The enzyme catalyses L-threonyl-[protein] + ATP = O-phospho-L-threonyl-[protein] + ADP + H(+). This is Serine/threonine-protein kinase PknH (pknH) from Mycobacterium bovis (strain ATCC BAA-935 / AF2122/97).